The sequence spans 376 residues: Chaperone protein DnaJ (376 aa).

Positions 5–70 (DYYEVLGVGR…DKKAAYDQFG (66 aa)) constitute a J domain. The CR-type zinc finger occupies 132-210 (GLTKELRIPT…CHGDGRVEKS (79 aa)). Zn(2+)-binding residues include Cys145, Cys148, Cys162, Cys165, Cys184, Cys187, Cys198, and Cys201. 4 CXXCXGXG motif repeats span residues 145-152 (CDLCDGSG), 162-169 (CTTCHGQG), 184-191 (CPTCHGRG), and 198-205 (CSKCHGDG).

It belongs to the DnaJ family. As to quaternary structure, homodimer. It depends on Zn(2+) as a cofactor.

The protein localises to the cytoplasm. Its function is as follows. Participates actively in the response to hyperosmotic and heat shock by preventing the aggregation of stress-denatured proteins and by disaggregating proteins, also in an autonomous, DnaK-independent fashion. Unfolded proteins bind initially to DnaJ; upon interaction with the DnaJ-bound protein, DnaK hydrolyzes its bound ATP, resulting in the formation of a stable complex. GrpE releases ADP from DnaK; ATP binding to DnaK triggers the release of the substrate protein, thus completing the reaction cycle. Several rounds of ATP-dependent interactions between DnaJ, DnaK and GrpE are required for fully efficient folding. Also involved, together with DnaK and GrpE, in the DNA replication of plasmids through activation of initiation proteins. The polypeptide is Chaperone protein DnaJ (Shewanella sp. (strain W3-18-1)).